The sequence spans 380 residues: Erythronate-4-phosphate dehydrogenase (380 aa).

2 residues coordinate substrate: serine 45 and threonine 66. The NAD(+) site is built by aspartate 146 and threonine 174. Arginine 207 is a catalytic residue. Aspartate 231 contributes to the NAD(+) binding site. Glutamate 236 is an active-site residue. The Proton donor role is filled by histidine 253. Residue glycine 256 participates in NAD(+) binding. Tyrosine 257 serves as a coordination point for substrate.

The protein belongs to the D-isomer specific 2-hydroxyacid dehydrogenase family. PdxB subfamily. In terms of assembly, homodimer.

Its subcellular location is the cytoplasm. It catalyses the reaction 4-phospho-D-erythronate + NAD(+) = (R)-3-hydroxy-2-oxo-4-phosphooxybutanoate + NADH + H(+). The protein operates within cofactor biosynthesis; pyridoxine 5'-phosphate biosynthesis; pyridoxine 5'-phosphate from D-erythrose 4-phosphate: step 2/5. In terms of biological role, catalyzes the oxidation of erythronate-4-phosphate to 3-hydroxy-2-oxo-4-phosphonooxybutanoate. This chain is Erythronate-4-phosphate dehydrogenase, found in Pseudomonas fluorescens (strain ATCC BAA-477 / NRRL B-23932 / Pf-5).